The sequence spans 188 residues: Insulin-like peptide INSL6 (188 aa).

Positions 1–22 (MKQLCCSCLLWLGLLLAPFSQE) are cleaved as a signal peptide. Disulfide bonds link Cys-33–Cys-169, Cys-45–Cys-182, and Cys-168–Cys-173. The propeptide at 53–158 (FSMEEQSPMT…SGLFWGNHPQ (106 aa)) is connecting peptide.

Belongs to the insulin family. In terms of tissue distribution, testis and prostate specific.

It is found in the secreted. Its function is as follows. May have a role in sperm development and fertilization. The protein is Insulin-like peptide INSL6 (Insl6) of Rattus norvegicus (Rat).